Consider the following 92-residue polypeptide: Long neurotoxin 3FTx-Oxy2 (92 aa).

Positions 1–21 (MKTLLLTLVVVTIVCLDLGYT) are cleaved as a signal peptide. 4 disulfide bridges follow: C24-C42, C35-C63, C67-C79, and C80-C85.

It belongs to the three-finger toxin family. Long-chain subfamily. Type II alpha-neurotoxin sub-subfamily. As to expression, expressed by the venom gland.

It localises to the secreted. Binds with high affinity to muscular (alpha-1/CHRNA1) and neuronal (alpha-7/CHRNA7) nicotinic acetylcholine receptor (nAChR) and inhibits acetylcholine from binding to the receptor, thereby impairing neuromuscular and neuronal transmission. In Oxyuranus microlepidotus (Inland taipan), this protein is Long neurotoxin 3FTx-Oxy2.